A 179-amino-acid polypeptide reads, in one-letter code: Putative 5'(3')-deoxyribonucleotidase (179 aa).

The Nucleophile role is filled by D9. Positions 9, 11, and 135 each coordinate Mg(2+). The active-site Proton donor is D11.

The protein belongs to the 5'(3')-deoxyribonucleotidase family. Requires Mg(2+) as cofactor.

Its function is as follows. Dephosphorylates the 5' and 2'(3')-phosphates of deoxyribonucleotides. This chain is Putative 5'(3')-deoxyribonucleotidase, found in Staphylococcus epidermidis (strain ATCC 35984 / DSM 28319 / BCRC 17069 / CCUG 31568 / BM 3577 / RP62A).